The primary structure comprises 615 residues: Sorting nexin-41 (615 aa).

The disordered stretch occupies residues 1-71 (MWNDEDNNPY…DEGDYVGQAN (71 aa)). Low complexity predominate over residues 42–53 (SHSSNPDISDFS). Residues 93–210 (PDMPILITDA…RFLDPNVSWS (118 aa)) form the PX domain. 4 residues coordinate a 1,2-diacyl-sn-glycero-3-phospho-(1D-myo-inositol-3-phosphate): R127, S129, K153, and R176. Disordered stretches follow at residues 218–277 (ASSV…RFPP) and 432–504 (QYLN…RKTS). Polar residues-rich tracts occupy residues 252-263 (LKSTSGTSSSPN) and 434-446 (LNRT…TKQR). The segment covering 447–456 (SLSTSSATSS) has biased composition (low complexity).

The protein belongs to the sorting nexin family.

Its subcellular location is the endosome membrane. It is found in the endomembrane system. May be required for cytoplasm to vacuole transport (Cvt) and pexophagy. The sequence is that of Sorting nexin-41 (snx41) from Emericella nidulans (strain FGSC A4 / ATCC 38163 / CBS 112.46 / NRRL 194 / M139) (Aspergillus nidulans).